Reading from the N-terminus, the 78-residue chain is Large ribosomal subunit protein bL28 (78 aa).

This sequence belongs to the bacterial ribosomal protein bL28 family.

The protein is Large ribosomal subunit protein bL28 of Psychrobacter arcticus (strain DSM 17307 / VKM B-2377 / 273-4).